The chain runs to 92 residues: Small ribosomal subunit protein bS20 (92 aa).

The interval Met1–Ala23 is disordered.

It belongs to the bacterial ribosomal protein bS20 family.

Binds directly to 16S ribosomal RNA. In Rhizobium leguminosarum bv. trifolii (strain WSM2304), this protein is Small ribosomal subunit protein bS20.